The chain runs to 113 residues: Dolichyl-diphosphooligosaccharide--protein glycosyltransferase subunit DAD1 (113 aa).

Ser-2 bears the N-acetylserine mark. The Cytoplasmic portion of the chain corresponds to 2 to 30; it reads SASVVSVISRFLEEYLSSTPQRLKLLDAY. Residues 31–51 traverse the membrane as a helical segment; sequence LLYILLTGALQFGYCLLVGTF. Position 52 (Pro-52) is a topological domain, lumenal. Residues 53–73 traverse the membrane as a helical segment; the sequence is FNSFLSGFISCVGSFILAVCL. At 74–92 the chain is on the cytoplasmic side; the sequence is RIQINPQNKADFQGISPER. The chain crosses the membrane as a helical span at residues 93 to 113; that stretch reads AFADFLFASTILHLVVMNFVG.

Belongs to the DAD/OST2 family. In terms of assembly, component of the oligosaccharyltransferase (OST) complex. OST exists in two different complex forms which contain common core subunits RPN1, RPN2, OST48, OST4, DAD1 and TMEM258, either STT3A or STT3B as catalytic subunits, and form-specific accessory subunits. STT3A complex assembly occurs through the formation of 3 subcomplexes. Subcomplex 1 contains RPN1 and TMEM258, subcomplex 2 contains the STT3A-specific subunits STT3A, DC2/OSTC, and KCP2 as well as the core subunit OST4, and subcomplex 3 contains RPN2, DAD1, and OST48. The STT3A complex can form stable complexes with the Sec61 complex or with both the Sec61 and TRAP complexes.

Its subcellular location is the endoplasmic reticulum membrane. Its pathway is protein modification; protein glycosylation. Its function is as follows. Subunit of the oligosaccharyl transferase (OST) complex that catalyzes the initial transfer of a defined glycan (Glc(3)Man(9)GlcNAc(2) in eukaryotes) from the lipid carrier dolichol-pyrophosphate to an asparagine residue within an Asn-X-Ser/Thr consensus motif in nascent polypeptide chains, the first step in protein N-glycosylation. N-glycosylation occurs cotranslationally and the complex associates with the Sec61 complex at the channel-forming translocon complex that mediates protein translocation across the endoplasmic reticulum (ER). All subunits are required for a maximal enzyme activity. The sequence is that of Dolichyl-diphosphooligosaccharide--protein glycosyltransferase subunit DAD1 from Mus musculus (Mouse).